Reading from the N-terminus, the 180-residue chain is ATP-dependent protease subunit HslV (180 aa).

Thr-5 is a catalytic residue. The Na(+) site is built by Gly-161, Cys-164, and Thr-167.

This sequence belongs to the peptidase T1B family. HslV subfamily. In terms of assembly, a double ring-shaped homohexamer of HslV is capped on each side by a ring-shaped HslU homohexamer. The assembly of the HslU/HslV complex is dependent on binding of ATP.

The protein localises to the cytoplasm. The enzyme catalyses ATP-dependent cleavage of peptide bonds with broad specificity.. Allosterically activated by HslU binding. Functionally, protease subunit of a proteasome-like degradation complex believed to be a general protein degrading machinery. The sequence is that of ATP-dependent protease subunit HslV from Campylobacter jejuni subsp. jejuni serotype O:2 (strain ATCC 700819 / NCTC 11168).